Here is a 76-residue protein sequence, read N- to C-terminus: U-scoloptoxin(13)-Sa1a (76 aa).

Positions M1 to A22 are cleaved as a signal peptide.

The protein belongs to the scoloptoxin-13 family. Post-translationally, contains 4 disulfide bonds. In terms of tissue distribution, expressed by the venom gland.

Its subcellular location is the secreted. The polypeptide is U-scoloptoxin(13)-Sa1a (Scolopendra alternans (Florida Keys giant centipede)).